A 231-amino-acid polypeptide reads, in one-letter code: Protein usf (231 aa).

The sequence is that of Protein usf (usf) from Aquifex pyrophilus.